Consider the following 481-residue polypeptide: Membrane-bound lytic murein transglycosylase F (481 aa).

Positions 1–21 (MKPLKLNYFFIGIITLLLALA) are cleaved as a signal peptide. Residues 22–268 (LWPSIPWRSS…RLEEKYLGHV (247 aa)) are non-LT domain. Residues 269 to 481 (GEFDYVDTTT…PAVPLTKVPE (213 aa)) are LT domain. Glu-313 is an active-site residue.

This sequence in the N-terminal section; belongs to the bacterial solute-binding protein 3 family. In the C-terminal section; belongs to the transglycosylase Slt family.

It is found in the cell outer membrane. It carries out the reaction Exolytic cleavage of the (1-&gt;4)-beta-glycosidic linkage between N-acetylmuramic acid (MurNAc) and N-acetylglucosamine (GlcNAc) residues in peptidoglycan, from either the reducing or the non-reducing ends of the peptidoglycan chains, with concomitant formation of a 1,6-anhydrobond in the MurNAc residue.. Functionally, murein-degrading enzyme that degrades murein glycan strands and insoluble, high-molecular weight murein sacculi, with the concomitant formation of a 1,6-anhydromuramoyl product. Lytic transglycosylases (LTs) play an integral role in the metabolism of the peptidoglycan (PG) sacculus. Their lytic action creates space within the PG sacculus to allow for its expansion as well as for the insertion of various structures such as secretion systems and flagella. The polypeptide is Membrane-bound lytic murein transglycosylase F (Pectobacterium atrosepticum (strain SCRI 1043 / ATCC BAA-672) (Erwinia carotovora subsp. atroseptica)).